The following is a 179-amino-acid chain: Large ribosomal subunit protein uL5 (179 aa).

The protein belongs to the universal ribosomal protein uL5 family. In terms of assembly, part of the 50S ribosomal subunit; part of the 5S rRNA/L5/L18/L25 subcomplex. Contacts the 5S rRNA and the P site tRNA. Forms a bridge to the 30S subunit in the 70S ribosome.

Its function is as follows. This is one of the proteins that bind and probably mediate the attachment of the 5S RNA into the large ribosomal subunit, where it forms part of the central protuberance. In the 70S ribosome it contacts protein S13 of the 30S subunit (bridge B1b), connecting the 2 subunits; this bridge is implicated in subunit movement. Contacts the P site tRNA; the 5S rRNA and some of its associated proteins might help stabilize positioning of ribosome-bound tRNAs. This is Large ribosomal subunit protein uL5 from Sodalis glossinidius (strain morsitans).